A 194-amino-acid polypeptide reads, in one-letter code: Probable RNA 2'-phosphotransferase (194 aa).

It belongs to the KptA/TPT1 family.

Removes the 2'-phosphate from RNA via an intermediate in which the phosphate is ADP-ribosylated by NAD followed by a presumed transesterification to release the RNA and generate ADP-ribose 1''-2''-cyclic phosphate (APPR&gt;P). May function as an ADP-ribosylase. In Escherichia coli O45:K1 (strain S88 / ExPEC), this protein is Probable RNA 2'-phosphotransferase.